Consider the following 252-residue polypeptide: Small ribosomal subunit protein uS2A (252 aa).

Ser2 carries the N-acetylserine modification. The segment at 209 to 252 (EVEQQVAEEATTEEAGEEEAKEEVTEEQAEATEWAEENADNVEW) is disordered. Acidic residues predominate over residues 218-252 (ATTEEAGEEEAKEEVTEEQAEATEWAEENADNVEW).

This sequence belongs to the universal ribosomal protein uS2 family. As to quaternary structure, component of the small ribosomal subunit. Mature ribosomes consist of a small (40S) and a large (60S) subunit. The 40S subunit contains about 33 different proteins and 1 molecule of RNA (18S). The 60S subunit contains about 49 different proteins and 3 molecules of RNA (25S, 5.8S and 5S). Interacts with RPS21.

The protein resides in the cytoplasm. Functionally, required for the assembly and/or stability of the 40S ribosomal subunit. Required for the processing of the 20S rRNA-precursor to mature 18S rRNA in a late step of the maturation of 40S ribosomal subunits. The chain is Small ribosomal subunit protein uS2A from Saccharomyces cerevisiae (strain RM11-1a) (Baker's yeast).